Here is a 123-residue protein sequence, read N- to C-terminus: Ig heavy chain V region HPCM6 (123 aa).

Positions 1-114 constitute an Ig-like domain; it reads EVKLVESGGG…YPHWYFDVWG (114 aa).

This Mus musculus (Mouse) protein is Ig heavy chain V region HPCM6.